The chain runs to 458 residues: MSTGKIIQVIGAVIDVEFARDNTPKVYDALNVVEAGLVLEVQQQIGDGVVRTIAMGSSDGLRRGMEVKNTNAPISVPVGHGTLGRIMNVLGEPIDEAGPIEYTEKRSIHQAPPAYDELALSTEILETGIKVVDLICPFAKGGKVGLFGGAGVGKTVTMMELINNIAKEHSGYSVFSGVGERTREGNDFYYEMKYSNVLDKVSLVYGQMNEPPGNRLRVALSGLTIAEGFRDEKRDVLMFIDNIYRYTLAGTEVSALLGRMPSAVGYQPTLAAEMGALQERITSTKTGSITSVQAVYVPADDLTDPSPATTFSHLDATIVLSRQIAELGIYPAVDPLDSTSRQLDPLVVGQDHYETARAVQKVLQRYKELKDIIAILGMDELSDEDKKIVDRARKIQRFLSQPFHVAEVFTGNPGKFVSLKDTVASFKAIVNGEYDHLPEQAFYMVGSIQEAIEKAKTL.

Position 148–155 (148–155 (GGAGVGKT)) interacts with ATP.

This sequence belongs to the ATPase alpha/beta chains family. In terms of assembly, F-type ATPases have 2 components, CF(1) - the catalytic core - and CF(0) - the membrane proton channel. CF(1) has five subunits: alpha(3), beta(3), gamma(1), delta(1), epsilon(1). CF(0) has three main subunits: a(1), b(2) and c(9-12). The alpha and beta chains form an alternating ring which encloses part of the gamma chain. CF(1) is attached to CF(0) by a central stalk formed by the gamma and epsilon chains, while a peripheral stalk is formed by the delta and b chains.

Its subcellular location is the cell inner membrane. The enzyme catalyses ATP + H2O + 4 H(+)(in) = ADP + phosphate + 5 H(+)(out). In terms of biological role, produces ATP from ADP in the presence of a proton gradient across the membrane. The catalytic sites are hosted primarily by the beta subunits. The protein is ATP synthase subunit beta of Francisella tularensis subsp. holarctica (strain FTNF002-00 / FTA).